The sequence spans 230 residues: Urease accessory protein UreE (230 aa).

The segment covering 200–210 has biased composition (basic residues); sequence HAIHSHGTGHT. The disordered stretch occupies residues 200 to 230; the sequence is HAIHSHGTGHTHSHDHDHSHSHGDHDHDHKH. Over residues 211–230 the composition is skewed to basic and acidic residues; that stretch reads HSHDHDHSHSHGDHDHDHKH.

It belongs to the UreE family.

The protein resides in the cytoplasm. In terms of biological role, involved in urease metallocenter assembly. Binds nickel. Probably functions as a nickel donor during metallocenter assembly. The chain is Urease accessory protein UreE from Yersinia enterocolitica serotype O:8 / biotype 1B (strain NCTC 13174 / 8081).